A 380-amino-acid chain; its full sequence is Flap endonuclease 1 (380 aa).

Residues 1 to 104 (MGIQGLAKLI…GELAKRSERR (104 aa)) are N-domain. Symmetric dimethylarginine; by PRMT5 is present on R19. Position 34 (D34) interacts with Mg(2+). The DNA site is built by R47 and R70. An N6-acetyllysine modification is found at K80. D86 provides a ligand contact to Mg(2+). R100 and R104 each carry symmetric dimethylarginine; by PRMT5. The I-domain stretch occupies residues 122–253 (EVEKFTKRLV…KRAVDLIQKH (132 aa)). Residues E158, E160, D179, and D181 each coordinate Mg(2+). Position 158 (E158) interacts with DNA. Position 187 is a phosphoserine; by CDK2 (S187). The residue at position 192 (R192) is a Symmetric dimethylarginine; by PRMT5. Residue S197 is modified to Phosphoserine. The DNA site is built by G231 and D233. D233 contributes to the Mg(2+) binding site. Phosphoserine occurs at positions 255, 293, and 335. Residues 327 to 380 (RLSKSRQGSTQGRLDDFFKVTGSLSSAKRKEPEPKGSTKKKAKTGAAGKFKRGK) form a disordered region. At T336 the chain carries Phosphothreonine. The segment at 336 to 344 (TQGRLDDFF) is interaction with PCNA. K354 is modified (N6-acetyllysine). Basic residues predominate over residues 363–380 (STKKKAKTGAAGKFKRGK). T364 carries the post-translational modification Phosphothreonine. Residues K375, K377, and K380 each carry the N6-acetyllysine modification.

It belongs to the XPG/RAD2 endonuclease family. FEN1 subfamily. In terms of assembly, interacts with PCNA. Three molecules of FEN1 bind to one PCNA trimer with each molecule binding to one PCNA monomer. PCNA stimulates the nuclease activity without altering cleavage specificity. The C-terminal domain binds EP300; can bind simultaneously to both PCNA and EP300. Interacts with DDX11; this interaction is direct and increases flap endonuclease activity of FEN1. Interacts with WDR4; regulating its endonuclease activity. Interacts with POLB. It depends on Mg(2+) as a cofactor. Post-translationally, acetylated by EP300. Acetylation inhibits both endonuclease and exonuclease activity. Acetylation also reduces DNA-binding activity but does not affect interaction with PCNA or EP300. Phosphorylation upon DNA damage induces relocalization to the nuclear plasma. Phosphorylation at Ser-187 by CDK2 occurs during late S-phase and results in dissociation from PCNA. In terms of processing, methylation at Arg-192 by PRMT5 impedes Ser-187 phosphorylation and increases interaction with PCNA.

It localises to the nucleus. The protein localises to the nucleolus. Its subcellular location is the nucleoplasm. It is found in the mitochondrion. Structure-specific nuclease with 5'-flap endonuclease and 5'-3' exonuclease activities involved in DNA replication and repair. During DNA replication, cleaves the 5'-overhanging flap structure that is generated by displacement synthesis when DNA polymerase encounters the 5'-end of a downstream Okazaki fragment. It enters the flap from the 5'-end and then tracks to cleave the flap base, leaving a nick for ligation. Also involved in the long patch base excision repair (LP-BER) pathway, by cleaving within the apurinic/apyrimidinic (AP) site-terminated flap. Acts as a genome stabilization factor that prevents flaps from equilibrating into structures that lead to duplications and deletions. Also possesses 5'-3' exonuclease activity on nicked or gapped double-stranded DNA, and exhibits RNase H activity. Also involved in replication and repair of rDNA and in repairing mitochondrial DNA. In Homo sapiens (Human), this protein is Flap endonuclease 1.